We begin with the raw amino-acid sequence, 284 residues long: CBY1-interacting BAR domain-containing protein 1-A (284 aa).

A mitochondrion-targeting transit peptide spans 1-48 (MSQTPEARARDNQTRQIQESVNNVEKHFGELCQIFAGYVRKTARLRDK). Residues 11 to 221 (DNQTRQIQES…DIDEEEDLEV (211 aa)) are BAR-like. 2 coiled-coil regions span residues 142 to 184 (RQII…IKKL) and 260 to 284 (NRQKNRIEDEDEEEEDDENSTEDEN). Positions 242-261 (SRTGSTSRGPSVISQPPGNR) are enriched in polar residues. The segment at 242 to 284 (SRTGSTSRGPSVISQPPGNRQKNRIEDEDEEEEDDENSTEDEN) is disordered. Over residues 267–284 (EDEDEEEEDDENSTEDEN) the composition is skewed to acidic residues.

Belongs to the CIBAR family.

It is found in the cytoplasm. The protein resides in the cytoskeleton. The protein localises to the microtubule organizing center. It localises to the centrosome. Its subcellular location is the centriole. It is found in the nucleus. The protein resides in the mitochondrion inner membrane. The protein localises to the cell projection. It localises to the cilium. Its subcellular location is the flagellum. Functionally, plays a critical role in regulating mitochondrial ultrastructure and function by maintaining the integrity of mitochondrial morphology, particularly the organization of cristae. Plays a crucial role in ciliogenesis. Plays a key role in the correct positioning of the annulus, a septin-based ring structure in the sperm flagellum, serving both as a physical barrier and a membrane diffusion barrier that separates the midpiece (MP) from the principal piece (PP). This chain is CBY1-interacting BAR domain-containing protein 1-A, found in Xenopus laevis (African clawed frog).